The chain runs to 557 residues: MAAQGFLLIATFLLVLMVLARPLGSGLARLINDIPLPGTTGVERVLFSALGVSDREMNWKQYLSAILGLNILGLAVLFFMLLGQHYLPLNPQQLPGLSWDLALNTAVSFVTNTNWQSYSGETTLSYFSQMAGLTVQNFLSAASGIAVIFALIRAFTRQSMSTLGNAWVDLLRITLWVLAPVALLIALFFIQQGALQNFLPYQAVTTIEGSQQLLPMGPVASQEAIKMLGTNGGGFFNANSSHPFENPTALTNFVQMLAIFLIPTALCFAFGEVAGDRRQGRMLLWAMSVIFVICTGVVMWAEVQGNPHLLALGADSSINMEGKESRFGVLVSSLFAVVTTAASCGAVIAMHDSFTALGGMVPMWLMQIGEVVFGGVGSGLYGMMLFVLLAVFIAGLMIGRTPEYLGKKIDVREMKLTALAILVTPTLVLMGAALAMMTDAGRSAMLNPGPHGFSEVLYAVSSAANNNGSAFAGLSANSPFWNCLLALCMFVGRFGVIIPVMAIAGSLVSKKSQPASSGTLPTHGPLFVGLLIGTVLLVGALTFIPALALGPVAEYLS.

12 helical membrane-spanning segments follow: residues 5-25 (GFLL…PLGS), 63-83 (LSAI…MLLG), 132-152 (GLTV…FALI), 170-190 (LLRI…LFFI), 253-273 (FVQM…FGEV), 283-303 (LLWA…WAEV), 329-349 (VLVS…AVIA), 356-376 (ALGG…FGGV), 379-399 (GLYG…LMIG), 416-436 (LTAL…ALAM), 484-504 (LLAL…MAIA), and 526-546 (LFVG…FIPA).

This sequence belongs to the KdpA family. As to quaternary structure, the system is composed of three essential subunits: KdpA, KdpB and KdpC.

Its subcellular location is the cell inner membrane. Functionally, part of the high-affinity ATP-driven potassium transport (or Kdp) system, which catalyzes the hydrolysis of ATP coupled with the electrogenic transport of potassium into the cytoplasm. This subunit binds the periplasmic potassium ions and delivers the ions to the membrane domain of KdpB through an intramembrane tunnel. The polypeptide is Potassium-transporting ATPase potassium-binding subunit (Escherichia coli O6:H1 (strain CFT073 / ATCC 700928 / UPEC)).